The sequence spans 84 residues: Putative membrane protein insertion efficiency factor (84 aa).

It belongs to the UPF0161 family.

The protein resides in the cell inner membrane. Its function is as follows. Could be involved in insertion of integral membrane proteins into the membrane. This is Putative membrane protein insertion efficiency factor from Shewanella denitrificans (strain OS217 / ATCC BAA-1090 / DSM 15013).